The sequence spans 161 residues: Ribosomal RNA large subunit methyltransferase H (161 aa).

S-adenosyl-L-methionine-binding positions include Leu-78, Gly-110, and 129–134; that span reads LGRMTF.

This sequence belongs to the RNA methyltransferase RlmH family. Homodimer.

It localises to the cytoplasm. It catalyses the reaction pseudouridine(1915) in 23S rRNA + S-adenosyl-L-methionine = N(3)-methylpseudouridine(1915) in 23S rRNA + S-adenosyl-L-homocysteine + H(+). Specifically methylates the pseudouridine at position 1915 (m3Psi1915) in 23S rRNA. This Symbiobacterium thermophilum (strain DSM 24528 / JCM 14929 / IAM 14863 / T) protein is Ribosomal RNA large subunit methyltransferase H.